A 215-amino-acid polypeptide reads, in one-letter code: MASATLTAWIKMPSFLKKILKLRGRRQEDESRSRMLSDSSMLSCRVNQLTSEGTEAGSTTPSTLPKDQALLIEPKVRAKEKSQHRRPKIIDQVRRVESLGEQASQRQKHMLETLINKIYTGPLGEELVQTLYLRIWTMEETPESLKILQMREDIRDQVLKMKTERWLRTLIRGEKTKLKDFQKRYEEVHPYLMKEKVEQVIMEEAWSLAAHIVQE.

Residues 12 to 34 form a disordered region; it reads MPSFLKKILKLRGRRQEDESRSR. The involved in self-degradation and in host STAT1 degradation stretch occupies residues 15–22; sequence FLKKILKL.

It belongs to the respirovirus protein C family. The different isoforms interact (via C-terminus) with unphosphorylated and phosphorylated human STAT1 (via N-terminus), favoring the formation of parallel STAT1 homodimers. The different isoforms do not interact with host STAT2. C protein interacts with L protein; this interaction has an inhibitory effect on viral transcription and replication. Y1 and Y2 proteins are produced not only by alternative initiation, but also by proteolytic cleavage of C'. Only alternative initiation is detected in vitro, whereas in vivo cleavage seems to be predominant.

It is found in the host cytoplasm. The different products prevent the establishment of cellular antiviral state by blocking the interferon-alpha/beta (IFN-alpha/beta) and IFN-gamma signaling pathways. They inhibit IFN-alpha/beta induced tyrosine phosphorylation of STAT1 and STAT2. Blocking the IFN-alpha/beta pathway requires binding to STAT1 in the cytoplasm. They inhibit IFN-gamma induced serine phosphorylation of STAT1. Block the IFN-gamma pathway by binding to and stabilizing the parallel form of the STAT1 dimer, further inducing high-molecular-weight complex formation and inhibition of transcription by IFN-gamma. May also have a role in preventing the cell to enter apoptosis. Modulate regulation of viral transcription and replication. Overexpression inhibits the viral RNA polymerase. The absence of all C', C, Y1 and Y2 proteins leads to viral delayed growth. Plays an important role in virion particles release. Modulates virion shape. This chain is Protein C' (P/V/C), found in Sendai virus (strain Nagoya) (SeV).